Consider the following 39-residue polypeptide: Cytochrome b559 subunit beta (39 aa).

The chain crosses the membrane as a helical span at residues 14 to 30 (WLAVHGLAVPTVFFLGS). H18 lines the heme pocket.

This sequence belongs to the PsbE/PsbF family. Heterodimer of an alpha subunit and a beta subunit. PSII is composed of 1 copy each of membrane proteins PsbA, PsbB, PsbC, PsbD, PsbE, PsbF, PsbH, PsbI, PsbJ, PsbK, PsbL, PsbM, PsbT, PsbX, PsbY, PsbZ, Psb30/Ycf12, at least 3 peripheral proteins of the oxygen-evolving complex and a large number of cofactors. It forms dimeric complexes. Heme b is required as a cofactor.

The protein resides in the plastid. It localises to the chloroplast thylakoid membrane. This b-type cytochrome is tightly associated with the reaction center of photosystem II (PSII). PSII is a light-driven water:plastoquinone oxidoreductase that uses light energy to abstract electrons from H(2)O, generating O(2) and a proton gradient subsequently used for ATP formation. It consists of a core antenna complex that captures photons, and an electron transfer chain that converts photonic excitation into a charge separation. This is Cytochrome b559 subunit beta from Welwitschia mirabilis (Tree tumbo).